The following is a 300-amino-acid chain: Virginiamycin B lyase (300 aa).

A substrate-binding site is contributed by histidine 231. Residue glutamate 270 coordinates Mg(2+). Residue histidine 272 is the Proton acceptor of the active site. Glutamate 287 provides a ligand contact to Mg(2+).

This sequence belongs to the Vgb family. In terms of assembly, monomer. Mg(2+) serves as cofactor.

Inactivates the type B streptogramin antibiotics by linearizing the lactone ring at the ester linkage, generating a free phenylglycine carboxylate and converting the threonyl moiety into 2-amino-butenoic acid. In Saccharopolyspora erythraea (strain ATCC 11635 / DSM 40517 / JCM 4748 / NBRC 13426 / NCIMB 8594 / NRRL 2338), this protein is Virginiamycin B lyase.